The chain runs to 316 residues: Olfactory receptor 2T11 (316 aa).

Topologically, residues 1–22 (MTNTSSSDFTLLGLLVNSEAAG) are extracellular. A glycan (N-linked (GlcNAc...) asparagine) is linked at asparagine 3. The helical transmembrane segment at 23–46 (IVFTVILAVFLGAVTANLVMIFLI) threads the bilayer. Over 47–54 (QVDSRLHT) the chain is Cytoplasmic. The helical transmembrane segment at 55–76 (PMYFLLSQLSIMDTLFICTTVP) threads the bilayer. Residues 77 to 97 (KLLADMVSKEKIISFVACGIQ) are Extracellular-facing. Cysteines 94 and 186 form a disulfide. A helical transmembrane segment spans residues 98–117 (IFLYLTMIGSEFFLLGLMAY). Topologically, residues 118 to 136 (DCYVAVCNPLRYPVLMNRK) are cytoplasmic. A helical membrane pass occupies residues 137 to 155 (KCLLLAAGAWFGGSLDGFL). The Extracellular segment spans residues 156-192 (LTPITMNVPYCGSRSINHFFCEIPAVLKLACADTSLY). A helical transmembrane segment spans residues 193-216 (ETLMYICCVLMLLIPISIISTSYS). The Cytoplasmic portion of the chain corresponds to 217–233 (LILLTIHRMPSAEGRKK). A helical membrane pass occupies residues 234-256 (AFTTCSSHLTVVSIFYGAAFYTY). The Extracellular portion of the chain corresponds to 257–269 (VLPQSFHTPEQDK). Residues 270 to 289 (VVSAFYTIVTPMLNPLIYSL) form a helical membrane-spanning segment. At 290–316 (RNKDVIGAFKKVFACCSSAQKVATSDA) the chain is on the cytoplasmic side.

Belongs to the G-protein coupled receptor 1 family.

Its subcellular location is the cell membrane. In terms of biological role, odorant receptor. This is Olfactory receptor 2T11 (OR2T11) from Homo sapiens (Human).